The following is a 306-amino-acid chain: 4-diphosphocytidyl-2-C-methyl-D-erythritol kinase (306 aa).

Lys-11 is a catalytic residue. 113–123 (PPEGGIGGGSS) is a binding site for ATP. Asp-153 is a catalytic residue.

This sequence belongs to the GHMP kinase family. IspE subfamily.

The enzyme catalyses 4-CDP-2-C-methyl-D-erythritol + ATP = 4-CDP-2-C-methyl-D-erythritol 2-phosphate + ADP + H(+). It participates in isoprenoid biosynthesis; isopentenyl diphosphate biosynthesis via DXP pathway; isopentenyl diphosphate from 1-deoxy-D-xylulose 5-phosphate: step 3/6. Its function is as follows. Catalyzes the phosphorylation of the position 2 hydroxy group of 4-diphosphocytidyl-2C-methyl-D-erythritol. In Leptospira biflexa serovar Patoc (strain Patoc 1 / ATCC 23582 / Paris), this protein is 4-diphosphocytidyl-2-C-methyl-D-erythritol kinase.